The primary structure comprises 87 residues: MVLVNFFFFRKKTPADIAKKRLQEIVSDHNIRNNFAPYFLPQLKKDLVQTISKYIHNPRILSIQLEKKDNNTSILKCKIIFFNEETQ.

Belongs to the MinE family.

In terms of biological role, prevents the cell division inhibition by proteins MinC and MinD at internal division sites while permitting inhibition at polar sites. This ensures cell division at the proper site by restricting the formation of a division septum at the midpoint of the long axis of the cell. The chain is Cell division topological specificity factor from Blochmanniella pennsylvanica (strain BPEN).